The following is a 508-amino-acid chain: DASH complex subunit ASK1 (508 aa).

2 disordered regions span residues 86–138 and 150–355; these read LVDG…TLSS and SRAA…QLRS. The segment covering 116 to 138 has biased composition (polar residues); the sequence is EPSQYTPRPQTSAGGHDTTTLSS. Basic and acidic residues predominate over residues 161–175; sequence QHHDDSSVLTDRDGD. Residues 201–213 are compositionally biased toward acidic residues; that stretch reads DEMDIDMDEEDSE. The segment covering 229–238 has biased composition (basic and acidic residues); it reads RYYDDDHGFE. The segment covering 239-258 has biased composition (acidic residues); that stretch reads QGEEEEDEEEEEEEEEEEEG. The segment covering 326–338 has biased composition (basic and acidic residues); sequence IKQEDTEKKRPLW.

Belongs to the DASH complex ASK1 family. As to quaternary structure, component of the DASH complex consisting of ASK1, DAD1, DAD2, DAD3, DAD4, DAM1, DUO1, HSK3, SPC19 and SPC34, with a stoichiometry of one copy of each subunit per complex. Multiple DASH complexes oligomerize to form a ring that encircles spindle microtubules and organizes the rod-like NDC80 complexes of the outer kinetochore. On cytoplasmic microtubules, DASH complexes appear to form patches instead of rings.

Its subcellular location is the chromosome. The protein resides in the centromere. The protein localises to the kinetochore. It is found in the cytoplasm. It localises to the cytoskeleton. Its subcellular location is the spindle. The protein resides in the nucleus. In terms of biological role, component of the DASH complex that connects microtubules with kinetochores and couples microtubule depolymerisation to chromosome movement; it is involved in retrieving kinetochores to the spindle poles before their re-orientation on the spindle in early mitosis and allows microtubule depolymerization to pull chromosomes apart and resist detachment during anaphase. Kinetochores, consisting of a centromere-associated inner segment and a microtubule-contacting outer segment, play a crucial role in chromosome segregation by mediating the physical connection between centromeric DNA and microtubules. Kinetochores also serve as an input point for the spindle assembly checkpoint, which delays anaphase until all chromosomes have bioriented on the mitotic spindle. The polypeptide is DASH complex subunit ASK1 (Chaetomium thermophilum (strain DSM 1495 / CBS 144.50 / IMI 039719) (Thermochaetoides thermophila)).